Consider the following 394-residue polypeptide: 1-deoxy-D-xylulose 5-phosphate reductoisomerase (394 aa).

The NADPH site is built by T12, G13, S14, I15, G38, N41, and N132. K133 lines the 1-deoxy-D-xylulose 5-phosphate pocket. E134 is an NADPH binding site. Position 156 (D156) interacts with Mn(2+). 4 residues coordinate 1-deoxy-D-xylulose 5-phosphate: S157, E158, S182, and H205. E158 is a binding site for Mn(2+). Position 211 (G211) interacts with NADPH. 1-deoxy-D-xylulose 5-phosphate is bound by residues S218, N223, K224, and E227. E227 provides a ligand contact to Mn(2+).

Belongs to the DXR family. Requires Mg(2+) as cofactor. Mn(2+) is required as a cofactor.

The enzyme catalyses 2-C-methyl-D-erythritol 4-phosphate + NADP(+) = 1-deoxy-D-xylulose 5-phosphate + NADPH + H(+). The protein operates within isoprenoid biosynthesis; isopentenyl diphosphate biosynthesis via DXP pathway; isopentenyl diphosphate from 1-deoxy-D-xylulose 5-phosphate: step 1/6. Its function is as follows. Catalyzes the NADPH-dependent rearrangement and reduction of 1-deoxy-D-xylulose-5-phosphate (DXP) to 2-C-methyl-D-erythritol 4-phosphate (MEP). The sequence is that of 1-deoxy-D-xylulose 5-phosphate reductoisomerase from Arthrobacter sp. (strain FB24).